We begin with the raw amino-acid sequence, 389 residues long: ATP phosphoribosyltransferase regulatory subunit (389 aa).

This sequence belongs to the class-II aminoacyl-tRNA synthetase family. HisZ subfamily. In terms of assembly, heteromultimer composed of HisG and HisZ subunits.

It is found in the cytoplasm. It participates in amino-acid biosynthesis; L-histidine biosynthesis; L-histidine from 5-phospho-alpha-D-ribose 1-diphosphate: step 1/9. In terms of biological role, required for the first step of histidine biosynthesis. May allow the feedback regulation of ATP phosphoribosyltransferase activity by histidine. The chain is ATP phosphoribosyltransferase regulatory subunit from Hydrogenovibrio crunogenus (strain DSM 25203 / XCL-2) (Thiomicrospira crunogena).